Consider the following 297-residue polypeptide: tRNA-cytidine(32) 2-sulfurtransferase (297 aa).

The short motif at 45 to 50 (SGGKDS) is the PP-loop motif element. Positions 120, 123, and 211 each coordinate [4Fe-4S] cluster.

The protein belongs to the TtcA family. Homodimer. The cofactor is Mg(2+). Requires [4Fe-4S] cluster as cofactor.

It is found in the cytoplasm. The enzyme catalyses cytidine(32) in tRNA + S-sulfanyl-L-cysteinyl-[cysteine desulfurase] + AH2 + ATP = 2-thiocytidine(32) in tRNA + L-cysteinyl-[cysteine desulfurase] + A + AMP + diphosphate + H(+). It functions in the pathway tRNA modification. In terms of biological role, catalyzes the ATP-dependent 2-thiolation of cytidine in position 32 of tRNA, to form 2-thiocytidine (s(2)C32). The sulfur atoms are provided by the cysteine/cysteine desulfurase (IscS) system. This Vibrio campbellii (strain ATCC BAA-1116) protein is tRNA-cytidine(32) 2-sulfurtransferase.